Consider the following 661-residue polypeptide: Galactan 5-O-arabinofuranosyltransferase (661 aa).

13 helical membrane passes run Leu26 to Gly46, Val64 to Leu84, Ala108 to Ile128, Ala194 to Trp214, Ile217 to Ala237, Pro243 to Ala263, Gly265 to Thr285, Leu286 to Val306, Pro312 to Gly332, Val362 to Val382, Met393 to Leu413, Leu418 to Ile438, and Thr458 to Ala478.

Belongs to the glycosyltransferase 85 family.

The protein resides in the cell membrane. The catalysed reaction is Adds an alpha-D-arabinofuranosyl group from trans,octacis-decaprenylphospho-beta-D-arabinofuranose at the 5-O-position of the eighth, tenth and twelfth galactofuranose unit of the galactofuranan chain of [beta-D-galactofuranosyl-(1-&gt;5)-beta-D-galactofuranosyl-(1-&gt;6)]14-beta-D-galactofuranosyl-(1-&gt;5)-beta-D-galactofuranosyl-(1-&gt;4)-alpha-L-rhamnopyranosyl-(1-&gt;3)-N-acetyl-alpha-D-glucosaminyl-diphospho-trans,octacis-decaprenol.. The protein operates within cell wall biogenesis; cell wall polysaccharide biosynthesis. Functionally, involved in the biosynthesis of the arabinogalactan (AG) region of the mycolylarabinogalactan-peptidoglycan (mAGP) complex, an essential component of the cell wall. Catalyzes the addition of the first key arabinofuranosyl (Araf) residue from the sugar donor decaprenyl-phospho-arabinose (DPA) on the C-5 of a 6-linked galactofuranosyl (Galf) of the galactan domain, thus 'priming' the galactan for further elaboration by other arabinofuranosyltransferases. The sequence is that of Galactan 5-O-arabinofuranosyltransferase from Corynebacterium glutamicum (strain ATCC 13032 / DSM 20300 / JCM 1318 / BCRC 11384 / CCUG 27702 / LMG 3730 / NBRC 12168 / NCIMB 10025 / NRRL B-2784 / 534).